The following is a 279-amino-acid chain: Ribonuclease T2 protein rnst-2 (279 aa).

Residues 1–17 form the signal peptide; it reads MKLLLLLCISCIPLAYS. C37 and C48 are disulfide-bonded. The active site involves H60. An N-linked (GlcNAc...) asparagine glycan is attached at N68. Residues E114 and H118 contribute to the active site. A disulfide bridge links C200 with C210.

This sequence belongs to the RNase T2 family. In terms of tissue distribution, expressed in the pharynx, hypodermis, muscle cells, sheath cells, intestinal cells, the vulva and tail regions.

It is found in the lysosome. The catalysed reaction is a ribonucleotidyl-ribonucleotide-RNA + H2O = a 3'-end 3'-phospho-ribonucleotide-RNA + a 5'-end dephospho-ribonucleoside-RNA + H(+). Its function is as follows. Probable endoribonuclease involved in the autophagy-mediated degradation of ribosomal RNA and ribosomal proteins in lysosomes. In Caenorhabditis elegans, this protein is Ribonuclease T2 protein rnst-2.